Consider the following 126-residue polypeptide: 13 kDa ribonucleoprotein-associated protein (126 aa).

This sequence belongs to the eukaryotic ribosomal protein eL8 family. In terms of assembly, component of the U3 snoRNP particle. Binds to the C'/D and B/C motifs in U3 snoRNA. Component of the 25S U4/U6.U5 tri-snRNP particle, a subcomplex of the spliceosome. Binds to the 5' stem-loop of U4 snRNA.

The protein resides in the nucleus. It localises to the nucleolus. In terms of biological role, common component of the spliceosome and rRNA processing machinery. In association with the spliceosomal U4/U6.U5 tri-snRNP particle, required for splicing of pre-mRNA. In association with box C/D snoRNPs, required for processing of pre-ribosomal RNA (rRNA) and site-specific 2'-O-methylation of substrate RNAs. Essential for the accumulation and stability of U4 snRNA, U6 snRNA, and box C/D snoRNAs. This Kluyveromyces lactis (strain ATCC 8585 / CBS 2359 / DSM 70799 / NBRC 1267 / NRRL Y-1140 / WM37) (Yeast) protein is 13 kDa ribonucleoprotein-associated protein (SNU13).